The primary structure comprises 382 residues: tRNA-specific 2-thiouridylase MnmA (382 aa).

Residues 34–41 (AMSGGVDS) and Leu60 contribute to the ATP site. Residue Cys128 is the Nucleophile of the active site. A disulfide bond links Cys128 and Cys224. Gly152 lines the ATP pocket. The interval 174-176 (RDQ) is interaction with tRNA. Catalysis depends on Cys224, which acts as the Cysteine persulfide intermediate.

Belongs to the MnmA/TRMU family.

The protein localises to the cytoplasm. The catalysed reaction is S-sulfanyl-L-cysteinyl-[protein] + uridine(34) in tRNA + AH2 + ATP = 2-thiouridine(34) in tRNA + L-cysteinyl-[protein] + A + AMP + diphosphate + H(+). In terms of biological role, catalyzes the 2-thiolation of uridine at the wobble position (U34) of tRNA, leading to the formation of s(2)U34. The chain is tRNA-specific 2-thiouridylase MnmA from Sphingopyxis alaskensis (strain DSM 13593 / LMG 18877 / RB2256) (Sphingomonas alaskensis).